Reading from the N-terminus, the 402-residue chain is uncharacterized protein (402 aa).

This is an uncharacterized protein from Saccharomyces cerevisiae (strain ATCC 204508 / S288c) (Baker's yeast).